A 470-amino-acid chain; its full sequence is Histidine--tRNA ligase (470 aa).

This sequence belongs to the class-II aminoacyl-tRNA synthetase family. As to quaternary structure, homodimer.

The protein localises to the cytoplasm. It carries out the reaction tRNA(His) + L-histidine + ATP = L-histidyl-tRNA(His) + AMP + diphosphate + H(+). The polypeptide is Histidine--tRNA ligase (Xanthomonas oryzae pv. oryzae (strain PXO99A)).